The following is an 877-amino-acid chain: Alanine--tRNA ligase (877 aa).

The Zn(2+) site is built by His-563, His-567, Cys-665, and His-669.

The protein belongs to the class-II aminoacyl-tRNA synthetase family. Requires Zn(2+) as cofactor.

Its subcellular location is the cytoplasm. It carries out the reaction tRNA(Ala) + L-alanine + ATP = L-alanyl-tRNA(Ala) + AMP + diphosphate. In terms of biological role, catalyzes the attachment of alanine to tRNA(Ala) in a two-step reaction: alanine is first activated by ATP to form Ala-AMP and then transferred to the acceptor end of tRNA(Ala). Also edits incorrectly charged Ser-tRNA(Ala) and Gly-tRNA(Ala) via its editing domain. This chain is Alanine--tRNA ligase, found in Thermoanaerobacter pseudethanolicus (strain ATCC 33223 / 39E) (Clostridium thermohydrosulfuricum).